The chain runs to 1213 residues: DNA-directed RNA polymerase subunit beta' (1213 aa).

4 residues coordinate Zn(2+): cysteine 60, cysteine 62, cysteine 75, and cysteine 78. Mg(2+) is bound by residues aspartate 450, aspartate 452, and aspartate 454. 4 residues coordinate Zn(2+): cysteine 819, cysteine 893, cysteine 900, and cysteine 903.

Belongs to the RNA polymerase beta' chain family. The RNAP catalytic core consists of 2 alpha, 1 beta, 1 beta' and 1 omega subunit. When a sigma factor is associated with the core the holoenzyme is formed, which can initiate transcription. Mg(2+) is required as a cofactor. Requires Zn(2+) as cofactor.

It carries out the reaction RNA(n) + a ribonucleoside 5'-triphosphate = RNA(n+1) + diphosphate. DNA-dependent RNA polymerase catalyzes the transcription of DNA into RNA using the four ribonucleoside triphosphates as substrates. This Streptococcus pyogenes serotype M2 (strain MGAS10270) protein is DNA-directed RNA polymerase subunit beta'.